The chain runs to 113 residues: Large ribosomal subunit protein eL34 (113 aa).

This sequence belongs to the eukaryotic ribosomal protein eL34 family.

The sequence is that of Large ribosomal subunit protein eL34 from Methanopyrus kandleri (strain AV19 / DSM 6324 / JCM 9639 / NBRC 100938).